A 769-amino-acid polypeptide reads, in one-letter code: Phenylalanine--tRNA ligase beta subunit (769 aa).

The tRNA-binding domain occupies 40–141 (GKLLTIARVA…GEPIPGCEPD (102 aa)). The region spanning 389 to 467 (PAPPPIELPL…RMIGYDSIAP (79 aa)) is the B5 domain. Residues aspartate 445, aspartate 451, glutamate 454, and glutamate 455 each contribute to the Mg(2+) site. An FDX-ACB domain is found at 676–768 (RRYPSSAFDL…GMRAKGYELR (93 aa)).

The protein belongs to the phenylalanyl-tRNA synthetase beta subunit family. Type 1 subfamily. In terms of assembly, tetramer of two alpha and two beta subunits. It depends on Mg(2+) as a cofactor.

The protein localises to the cytoplasm. It catalyses the reaction tRNA(Phe) + L-phenylalanine + ATP = L-phenylalanyl-tRNA(Phe) + AMP + diphosphate + H(+). In Solibacter usitatus (strain Ellin6076), this protein is Phenylalanine--tRNA ligase beta subunit.